The following is a 259-amino-acid chain: Small ribosomal subunit protein eS1 (259 aa).

Ala2 bears the N-acetylalanine; partial mark.

Belongs to the eukaryotic ribosomal protein eS1 family. Component of the small ribosomal subunit. Mature ribosomes consist of a small (40S) and a large (60S) subunit. The 40S subunit contains about 33 different proteins and 1 molecule of RNA (18S). The 60S subunit contains about 49 different proteins and 3 molecules of RNA (25S, 5.8S and 5S).

It localises to the cytoplasm. The polypeptide is Small ribosomal subunit protein eS1 (Cryptococcus neoformans var. neoformans serotype D (strain B-3501A) (Filobasidiella neoformans)).